The sequence spans 145 residues: RNA polymerase-binding transcription factor DksA (145 aa).

4 residues coordinate Zn(2+): Cys108, Cys111, Cys129, and Cys132. The dksA C4-type zinc finger occupies 108-132 (CDCCGEEIGIRRLEARPTADLCIDC).

Belongs to the DksA family. Interacts directly with the RNA polymerase.

The protein localises to the cytoplasm. Functionally, transcription factor that acts by binding directly to the RNA polymerase (RNAP). Required for negative regulation of rRNA expression and positive regulation of several amino acid biosynthesis promoters. Also required for regulation of fis expression. The protein is RNA polymerase-binding transcription factor DksA of Haemophilus influenzae (strain ATCC 51907 / DSM 11121 / KW20 / Rd).